We begin with the raw amino-acid sequence, 76 residues long: Beta-defensin 121 (76 aa).

The first 15 residues, 1-15 (MKLLLLLLTVTLLLA), serve as a signal peptide directing secretion. Cystine bridges form between Cys23-Cys50, Cys30-Cys44, and Cys34-Cys51.

This sequence belongs to the beta-defensin family.

Its subcellular location is the secreted. Has antibacterial activity. The protein is Beta-defensin 121 (DEFB121) of Pan troglodytes (Chimpanzee).